The chain runs to 1524 residues: DNA polymerase alpha catalytic subunit (1524 aa).

Disordered stretches follow at residues 1–53 (MSGD…QKPI) and 68–139 (RRRE…KVNP). The segment covering 20 to 30 (SSRKDTLERLK) has biased composition (basic and acidic residues). The segment covering 79–96 (EDGEGGDLGYLDEGEEED) has biased composition (acidic residues). Cysteine 1333, cysteine 1336, cysteine 1375, cysteine 1378, cysteine 1414, cysteine 1419, cysteine 1440, and cysteine 1446 together coordinate Zn(2+). The segment at 1333-1378 (CPSCSTAFNCPSIISSVCASISKKPATPETEESDSTFWLKLHCPKC) adopts a CysA-type zinc-finger fold. The short motif at 1414 to 1446 (CEDESCKHTTRSPNFRLLGERERGTVCPNYPNC) is the CysB motif element.

The protein belongs to the DNA polymerase type-B family.

It is found in the nucleus. The catalysed reaction is DNA(n) + a 2'-deoxyribonucleoside 5'-triphosphate = DNA(n+1) + diphosphate. Functionally, polymerase alpha in a complex with DNA primase is a replicative polymerase. In Arabidopsis thaliana (Mouse-ear cress), this protein is DNA polymerase alpha catalytic subunit (POLA).